Consider the following 459-residue polypeptide: MFRGKVRHIHFIGIGGSGMNGIAQVLLNQGFTVTGSDLKESQTVINLKNMGAKIYIGHDPKNVDGADVVVYSSAVKQDNPELLRAKQLGIPTIPRGEMLAELMRFKYGIAIAGSHGKTTTTSMVGTILGKTGYDPTVVIGGKLEAYGSNAKLGSGDFIVTEADESDGSFLKLTPTIVSINNIDLEHIGFYKNLNDIKRAFIDFANKVPFYGAVAVNIDDQNIKDIIPEIEKKIIRFGISEDSDIRGYDLRLENGRYRFKVNDFGEIYLSIPGKHNVYNALAAISISVELGVPFCVIKEALENFKNANRRFEIKYDGSVTVIDDYAHHPTEIKATLSATREMFDGRRIIAVFQPHRYSRTFSLYDHFVRSFNIPDITVITEIFPAGESPIDSVNGEKLSSDIKKETGKTVLYGEDLQKTFNILKNILKKDDVLLILGAGNVTRLSDQISQFLKNKEGALR.

113–119 (GSHGKTT) contributes to the ATP binding site.

The protein belongs to the MurCDEF family.

It is found in the cytoplasm. It carries out the reaction UDP-N-acetyl-alpha-D-muramate + L-alanine + ATP = UDP-N-acetyl-alpha-D-muramoyl-L-alanine + ADP + phosphate + H(+). It functions in the pathway cell wall biogenesis; peptidoglycan biosynthesis. Cell wall formation. The polypeptide is UDP-N-acetylmuramate--L-alanine ligase (Persephonella marina (strain DSM 14350 / EX-H1)).